A 1002-amino-acid chain; its full sequence is Glutamate receptor ionotropic, NMDA 3B (1002 aa).

Positions 1 to 24 (MESVRTLWLSVALALAVGSRVVRG) are cleaved as a signal peptide. At 25–574 (HPQPCRVPTR…PIGAFMWPLH (550 aa)) the chain is on the extracellular side. Asn69, Asn212, Asn344, Asn451, and Asn465 each carry an N-linked (GlcNAc...) asparagine glycan. 2 disulfide bridges follow: Cys439–Cys475 and Cys445–Cys476. Residues Ser531, Ser533, and Arg538 each contribute to the glycine site. Positions 533 and 538 each coordinate D-serine. Residues 575 to 594 (WSMWVGVFAALHLTALFLTL) traverse the membrane as a helical segment. Residues 595–615 (YEWRSPYGLTPRGRNRGTVFS) are Cytoplasmic-facing. An intramembrane region (discontinuously helical) is located at residues 616–627 (YSSALNLCYAIL). Residues 628-641 (FGRTVSSKTPKCPT) lie on the Cytoplasmic side of the membrane. Residues 642–661 (GRFLMNLWAIFCLLVLSSYT) traverse the membrane as a helical segment. Topologically, residues 662–832 (ANLAAVMVGD…TLQMGVYHFS (171 aa)) are extracellular. Ser701 contacts glycine. The D-serine site is built by Ser701, Ala702, and Asp745. Asp745 lines the glycine pocket. Asn786 carries an N-linked (GlcNAc...) asparagine glycan. A helical transmembrane segment spans residues 833–848 (GLFVLLCLGLGSALLT). Topologically, residues 849–1002 (SLGEHVFYRL…RLLHAAPAES (154 aa)) are cytoplasmic. The tract at residues 882 to 910 (ALNTGPPEGQQERAEQERSGPKDELPATD) is disordered. A compositionally biased stretch (basic and acidic residues) spans 891-906 (QQERAEQERSGPKDEL). Residues 944–985 (LCSNGPGLQAELRELELRIEAARERLRSALLRRGELRALLGD) adopt a coiled-coil conformation. The interval 951–984 (LQAELRELELRIEAARERLRSALLRRGELRALLG) is involved in the trafficking and surface expression of NMDARs.

This sequence belongs to the glutamate-gated ion channel (TC 1.A.10.1) family. NR3B/GRIN3B subfamily. As to quaternary structure, forms heterotetrameric channels that contain at least two GluN1 subunits and at least a combination of one GluN2 and one GluN3 subunits (in vitro). Forms heterotetrameric channels composed of two GluN1/zeta subunits (GRIN1), and two identical GluN3 subunits (GRIN3A or GRIN3B) (in vitro). Does not form functional homomeric channels. As to expression, expressed in the hippocampus, the corpus callosum, in the facial and trigeminal nuclei of the brainstem and the ventral horn of the spinal cord.

Its subcellular location is the cell membrane. It is found in the postsynaptic cell membrane. It catalyses the reaction Ca(2+)(in) = Ca(2+)(out). It carries out the reaction Na(+)(in) = Na(+)(out). Excitatory glycine receptors are inhibited by D-serine at a concentrion of 100uM. Its function is as follows. Component of a non-conventional N-methyl-D-aspartate (NMDA) receptors (NMDARs) that function as heterotetrameric, ligand-gated cation channels with low calcium permeability and low voltage-dependent block by Mg(2+). Forms glutamatergic receptor complexes with GluN1 and GluN2 subunits which are activated by glycine binding to the GluN1 and GluN3 subunits and L-glutamate binding to GluN2 subunits. Forms excitatory glycinergic receptor complexes with GluN1 alone which are activated by glycine binding to the GluN1 and GluN3 subunits. GluN3B subunit also binds D-serine and, in the absence of glycine, activates glycinergic receptor complexes, but with lower efficacy than glycine. Each GluN3 subunit confers differential attributes to channel properties, including activation, deactivation and desensitization kinetics, pH sensitivity, Ca2(+) permeability, and binding to allosteric modulators. The polypeptide is Glutamate receptor ionotropic, NMDA 3B (Rattus norvegicus (Rat)).